The primary structure comprises 85 residues: ATP synthase subunit c (85 aa).

The next 2 helical transmembrane spans lie at 10 to 30 (IAVAIIVGLCALGTAVGFAVL) and 53 to 73 (FIIAGLLDAVPMIGIVIALLF).

The protein belongs to the ATPase C chain family. F-type ATPases have 2 components, F(1) - the catalytic core - and F(0) - the membrane proton channel. F(1) has five subunits: alpha(3), beta(3), gamma(1), delta(1), epsilon(1). F(0) has three main subunits: a(1), b(2) and c(10-14). The alpha and beta chains form an alternating ring which encloses part of the gamma chain. F(1) is attached to F(0) by a central stalk formed by the gamma and epsilon chains, while a peripheral stalk is formed by the delta and b chains.

It is found in the cell inner membrane. F(1)F(0) ATP synthase produces ATP from ADP in the presence of a proton or sodium gradient. F-type ATPases consist of two structural domains, F(1) containing the extramembraneous catalytic core and F(0) containing the membrane proton channel, linked together by a central stalk and a peripheral stalk. During catalysis, ATP synthesis in the catalytic domain of F(1) is coupled via a rotary mechanism of the central stalk subunits to proton translocation. Its function is as follows. Key component of the F(0) channel; it plays a direct role in translocation across the membrane. A homomeric c-ring of between 10-14 subunits forms the central stalk rotor element with the F(1) delta and epsilon subunits. This is ATP synthase subunit c from Vibrio vulnificus (strain CMCP6).